Reading from the N-terminus, the 643-residue chain is Tigger transposable element-derived protein 5 (643 aa).

Residues 1–50 (MYSAGPPAVPAPRRCRRPPPGRPMQPPRPPAPAPVPAARPPPPAPGPRPR) are disordered. A compositionally biased stretch (pro residues) spans 20-48 (PGRPMQPPRPPAPAPVPAARPPPPAPGPR). The 52-residue stretch at 52–103 (AVKMAFRKAYSIKDKLQAIERVKGGERQASVCRDFGVPGGTLRGWLKDEPKL) folds into the HTH psq-type domain. 2 DNA-binding regions (H-T-H motif) span residues 79 to 99 (QASV…WLKD) and 150 to 183 (PLIQ…WQKR). One can recognise an HTH CENPB-type domain in the interval 117 to 190 (QRKKMRLANE…QKRHGISSQR (74 aa)). Residues 197 to 236 (PVAAGPAPGPPVKQEPAQPTRAGPLPDRAASTPAPAEGGY) are disordered. Residues 238 to 358 (DEQIYNANVT…LQQKAVLLVA (121 aa)) form the DDE-1 domain. Residues 366-395 (EARMPALEESEETRRRCRPEPTGPPEELQT) form a disordered region.

This sequence belongs to the tigger transposable element derived protein family.

The protein localises to the nucleus. The polypeptide is Tigger transposable element-derived protein 5 (TIGD5) (Bos taurus (Bovine)).